Reading from the N-terminus, the 630-residue chain is Elongation factor 4 (630 aa).

The segment at 1–22 (MTVARNRAGAGPGKGSPISSFA) is disordered. Positions 30–211 (ARIRNFCIIA…EVVRQVPAPV (182 aa)) constitute a tr-type G domain. Residues 42–47 (DHGKST) and 158–161 (NKID) each bind GTP.

Belongs to the TRAFAC class translation factor GTPase superfamily. Classic translation factor GTPase family. LepA subfamily.

The protein localises to the cell membrane. The catalysed reaction is GTP + H2O = GDP + phosphate + H(+). Its function is as follows. Required for accurate and efficient protein synthesis under certain stress conditions. May act as a fidelity factor of the translation reaction, by catalyzing a one-codon backward translocation of tRNAs on improperly translocated ribosomes. Back-translocation proceeds from a post-translocation (POST) complex to a pre-translocation (PRE) complex, thus giving elongation factor G a second chance to translocate the tRNAs correctly. Binds to ribosomes in a GTP-dependent manner. The protein is Elongation factor 4 of Rhodococcus jostii (strain RHA1).